A 418-amino-acid polypeptide reads, in one-letter code: Serine/threonine-protein kinase Sgk1 (418 aa).

Residues proline 50–proline 78 are disordered. Residues glutamine 68 to proline 78 show a composition bias toward polar residues. In terms of domain architecture, Protein kinase spans phenylalanine 85–phenylalanine 342. Residues isoleucine 91 to valine 99 and lysine 114 each bind ATP. Aspartate 209 serves as the catalytic Proton acceptor. An AGC-kinase C-terminal domain is found at serine 343–leucine 418.

It belongs to the protein kinase superfamily. AGC Ser/Thr protein kinase family.

The protein localises to the cytoplasm. The protein resides in the nucleus. Its subcellular location is the endoplasmic reticulum. It catalyses the reaction L-seryl-[protein] + ATP = O-phospho-L-seryl-[protein] + ADP + H(+). The catalysed reaction is L-threonyl-[protein] + ATP = O-phospho-L-threonyl-[protein] + ADP + H(+). Its function is as follows. Protein kinase that may play an important role in cellular stress response. Plays an important role in activating certain potassium, sodium, and chloride channels, suggesting an involvement in the regulation of processes such as cell survival, neuronal excitability, and renal sodium excretion. The protein is Serine/threonine-protein kinase Sgk1 (sgk1) of Xenopus tropicalis (Western clawed frog).